Here is a 269-residue protein sequence, read N- to C-terminus: Hydroxypyruvate/pyruvate aldolase (269 aa).

The active-site Proton acceptor is His48. A divalent metal cation is bound by residues Glu152 and Asp178.

Belongs to the HpcH/HpaI aldolase family. It depends on a divalent metal cation as a cofactor.

It catalyses the reaction D-glyceraldehyde + pyruvate = 2-dehydro-3-deoxy-L-galactonate. Aldolase which can catalyze in vitro the aldolisation reaction between hydroxypyruvate (HPA) or pyruvate (PA) and D-glyceraldehyde (D-GA). The condensation of pyruvate and D-glyceraldehyde produces 2-dehydro-3-deoxy-L-galactonate as the major product. Has weak activity with hydroxypyruvate and D-glyceraldehyde. This Delftia acidovorans (strain DSM 14801 / SPH-1) protein is Hydroxypyruvate/pyruvate aldolase.